Consider the following 327-residue polypeptide: Probable cell division protein WhiA (327 aa).

The segment at residues 275–308 (SLEELGRLADPPMTKDAVAGRIRRLLSMADRKAK) is a DNA-binding region (H-T-H motif).

This sequence belongs to the WhiA family.

Functionally, involved in cell division and chromosome segregation. This chain is Probable cell division protein WhiA, found in Mycobacterium marinum (strain ATCC BAA-535 / M).